The chain runs to 75 residues: MRSGIHPDYHEITVIMTDGTEYKTRSCYGEPGATLRLDVDPKSHPAWTGVQRMMDTGGQVAKFNKRFAGIGTRTK.

This sequence belongs to the bacterial ribosomal protein bL31 family. Type A subfamily. In terms of assembly, part of the 50S ribosomal subunit.

Binds the 23S rRNA. The chain is Large ribosomal subunit protein bL31 from Gluconobacter oxydans (strain 621H) (Gluconobacter suboxydans).